The primary structure comprises 502 residues: UDP-N-acetylmuramate--L-alanine ligase (502 aa).

Residue 119-125 (GSHGKST) coordinates ATP.

Belongs to the MurCDEF family.

The protein localises to the cytoplasm. The catalysed reaction is UDP-N-acetyl-alpha-D-muramate + L-alanine + ATP = UDP-N-acetyl-alpha-D-muramoyl-L-alanine + ADP + phosphate + H(+). Its pathway is cell wall biogenesis; peptidoglycan biosynthesis. Functionally, cell wall formation. This is UDP-N-acetylmuramate--L-alanine ligase from Frankia casuarinae (strain DSM 45818 / CECT 9043 / HFP020203 / CcI3).